Reading from the N-terminus, the 171-residue chain is ATP synthase subunit b (171 aa).

Residues 24-44 (INLVIVIGVLYWFLKGFLGGI) form a helical membrane-spanning segment.

Belongs to the ATPase B chain family. As to quaternary structure, F-type ATPases have 2 components, F(1) - the catalytic core - and F(0) - the membrane proton channel. F(1) has five subunits: alpha(3), beta(3), gamma(1), delta(1), epsilon(1). F(0) has four main subunits: a(1), b(1), b'(1) and c(10-14). The alpha and beta chains form an alternating ring which encloses part of the gamma chain. F(1) is attached to F(0) by a central stalk formed by the gamma and epsilon chains, while a peripheral stalk is formed by the delta, b and b' chains.

The protein localises to the cellular thylakoid membrane. F(1)F(0) ATP synthase produces ATP from ADP in the presence of a proton or sodium gradient. F-type ATPases consist of two structural domains, F(1) containing the extramembraneous catalytic core and F(0) containing the membrane proton channel, linked together by a central stalk and a peripheral stalk. During catalysis, ATP synthesis in the catalytic domain of F(1) is coupled via a rotary mechanism of the central stalk subunits to proton translocation. Its function is as follows. Component of the F(0) channel, it forms part of the peripheral stalk, linking F(1) to F(0). This is ATP synthase subunit b from Synechococcus sp. (strain WH7803).